The primary structure comprises 177 residues: METHATTILAVRKDGIVALAGDGQVTMGQTMIMKHAAQKVRRLHDGKILAGFAGATADAFTLFELFESKLKEVRGHMVRAAVEMTKDWRKDKYLRKLEAMLLLADREHILVLSGTGDVIEPDDNVAAIGSGGPYALAAARALSRHSGLDAETIARESMRIAAEICVYTNDHVTLETL.

The active site involves threonine 6. Na(+) contacts are provided by alanine 162, cysteine 165, and threonine 168.

The protein belongs to the peptidase T1B family. HslV subfamily. In terms of assembly, a double ring-shaped homohexamer of HslV is capped on each side by a ring-shaped HslU homohexamer. The assembly of the HslU/HslV complex is dependent on binding of ATP.

Its subcellular location is the cytoplasm. It catalyses the reaction ATP-dependent cleavage of peptide bonds with broad specificity.. Allosterically activated by HslU binding. Its function is as follows. Protease subunit of a proteasome-like degradation complex believed to be a general protein degrading machinery. The sequence is that of ATP-dependent protease subunit HslV from Desulfovibrio desulfuricans (strain ATCC 27774 / DSM 6949 / MB).